Here is a 132-residue protein sequence, read N- to C-terminus: Small ribosomal subunit protein uS19 (132 aa).

This sequence belongs to the universal ribosomal protein uS19 family.

Functionally, protein S19 forms a complex with S13 that binds strongly to the 16S ribosomal RNA. This Korarchaeum cryptofilum (strain OPF8) protein is Small ribosomal subunit protein uS19.